Here is a 253-residue protein sequence, read N- to C-terminus: A-type ATP synthase subunit B (253 aa).

Belongs to the ATPase alpha/beta chains family. In terms of assembly, has multiple subunits with at least A(3), B(3), C, D, E, F, H, I and proteolipid K(x).

It is found in the cell membrane. In terms of biological role, component of the A-type ATP synthase that produces ATP from ADP in the presence of a proton gradient across the membrane. The B chain is a regulatory subunit. This is A-type ATP synthase subunit B from Methanothermococcus thermolithotrophicus (Methanococcus thermolithotrophicus).